Here is a 1178-residue protein sequence, read N- to C-terminus: Phosphate system positive regulatory protein PHO81 (1178 aa).

The 169-residue stretch at 1 to 169 (MKFGKYLEAR…QSHDKDFYLA (169 aa)) folds into the SPX domain. Residues 210–250 (QSSTFTNDDDDDNNTSNNNKHNNNNNNNNNNNNNNNNNNIL) are disordered. Residues 223–250 (NTSNNNKHNNNNNNNNNNNNNNNNNNIL) are compositionally biased toward low complexity. ANK repeat units lie at residues 423-452 (HSRV…LEDV), 458-487 (DSKT…ANAS), 506-535 (VQFD…KQNA), 556-586 (TGLC…DPNE), 591-620 (NKWT…RLDI), and 624-653 (NGHS…NLPS). Residues 871–1178 (IINYEPYWKS…ELLFENNIDM (308 aa)) enclose the GP-PDE domain. A Phosphoserine modification is found at S956.

In terms of assembly, associates specifically with the PHO80-PHO85 and PCL7-PHO85 cyclin-CDK complexes, and much of this interaction is mediated through the PHO80 and PCL7 cyclin subunits. Interacts with the transcription factor PHO4. In terms of processing, phosphorylated by the cyclin-CDK PHO80-PHO85. Phosphorylation mediates the formation of a stable interaction with the cyclin-CDK and is required for function as an active inhibitor of the complex under phosphate starvation conditions.

Its subcellular location is the cytoplasm. The protein localises to the nucleus. Functionally, inhibits the kinase activity of the cyclin-CDKs PHO80-PHO85 and PCL7-PHO85 under low-phosphate conditions. The chain is Phosphate system positive regulatory protein PHO81 (PHO81) from Saccharomyces cerevisiae (strain ATCC 204508 / S288c) (Baker's yeast).